The sequence spans 292 residues: Homoserine kinase (292 aa).

84–94 (PLSRGLGSSSA) is an ATP binding site.

This sequence belongs to the GHMP kinase family. Homoserine kinase subfamily.

Its subcellular location is the cytoplasm. The enzyme catalyses L-homoserine + ATP = O-phospho-L-homoserine + ADP + H(+). The protein operates within amino-acid biosynthesis; L-threonine biosynthesis; L-threonine from L-aspartate: step 4/5. Functionally, catalyzes the ATP-dependent phosphorylation of L-homoserine to L-homoserine phosphate. In Campylobacter jejuni subsp. jejuni serotype O:23/36 (strain 81-176), this protein is Homoserine kinase.